The following is a 207-amino-acid chain: Ras-related protein Rab-8A (207 aa).

10 residues coordinate GTP: Ser-17, Gly-18, Val-19, Gly-20, Lys-21, Thr-22, Cys-23, Ser-35, Ser-39, and Thr-40. Thr-22 contacts Mg(2+). 2 consecutive short sequence motifs (switch) follow at residues 31 to 45 and 63 to 80; these read DAFN…GIDF and DTAG…YYRG. Residues Thr-40 and Asp-63 each contribute to the Mg(2+) site. Gly-66 is a binding site for GTP. Phosphothreonine; by LRRK2 is present on Thr-72. Asn-121, Lys-122, Asp-124, Ala-152, and Lys-153 together coordinate GTP. Phosphoserine occurs at positions 181 and 185. Cys-204 bears the Cysteine methyl ester mark. Cys-204 carries the S-geranylgeranyl cysteine lipid modification. The propeptide at 205-207 is removed in mature form; sequence SLL.

Belongs to the small GTPase superfamily. Rab family. As to quaternary structure, interacts (GTP-bound form) with MICALL1; regulates RAB8A association with recycling endosomes. Interacts with MICALL2; competes with RAB13 and is involved in E-cadherin endocytic recycling. Interacts (GTP-bound form) with MICAL1, MICALCL, MICAL3 and EHBP1L1; two molecules of RAB8A can bind to one molecule of the effector protein; ternary complexes of RAB8A, RAB13 and either MICAL1 or EHBP1L1 are possible. Interacts (GTP-bound form) with EHBP1. Interacts with EHD1. Interacts with MAP4K2 and SYTL4. Interacts with SGSM1 and SGSM3. Interacts with RABIF, RIMS2, RPH3A and RPH3A. Interacts with OPTN. Interacts with MYO5B. Interacts with CIMAP3. Interacts with BIRC6/bruce. Interacts with OCRL. Interacts with AHI1. Interacts with DCDC1. Interacts with LRRK2; interaction facilitates phosphorylation of Thr-72. Interacts with RAB31P, GDI1, GDI2, CHM, CHML, RABGGTA, RABGGTB, TBC1D15 and INPP5B; these interactions are dependent on Thr-72 not being phosphorylated. Interacts with RILPL1 and RILPL2; these interactions are dependent on the phosphorylation of Thr-72 by LRRK2. Interacts with DZIP1; prevents inhibition by the GDP-dissociation inhibitor GDI2. Interacts with RAB3IP/Rabin8, RAB3IP functions as guanine exchange factor (GEF) towards RAB8A. Interacts (in GDP-bound form) with RPGR, RPGR functions as GEF towards RAB8A. The cofactor is Mg(2+). Phosphorylation of Thr-72 in the switch II region by LRRK2 prevents the association of RAB regulatory proteins, including CHM, CHML and RAB GDP dissociation inhibitors GDI1 and GDI2. Phosphorylation by LRRK2 is required for localization to stressed lysosomes.

The protein resides in the cell membrane. The protein localises to the golgi apparatus. It is found in the endosome membrane. It localises to the recycling endosome membrane. Its subcellular location is the cell projection. The protein resides in the cilium. The protein localises to the cytoplasmic vesicle. It is found in the phagosome membrane. It localises to the cytoplasm. Its subcellular location is the cytoskeleton. The protein resides in the microtubule organizing center. The protein localises to the centrosome. It is found in the centriole. It localises to the cilium basal body. Its subcellular location is the midbody. The protein resides in the lysosome. The catalysed reaction is GTP + H2O = GDP + phosphate + H(+). Its activity is regulated as follows. Regulated by guanine nucleotide exchange factors (GEFs) such as RAB3IP/Rabin8 and RPGR which promote the exchange of bound GDP for free GTP, GTPase activating proteins (GAPs) which increase the GTP hydrolysis activity, and GDP dissociation inhibitors (GDIs) which inhibit the dissociation of the nucleotide from the GTPase. Activated in response to insulin. Functionally, the small GTPases Rab are key regulators of intracellular membrane trafficking, from the formation of transport vesicles to their fusion with membranes. Rabs cycle between an inactive GDP-bound form and an active GTP-bound form that is able to recruit to membranes different sets of downstream effectors directly responsible for vesicle formation, movement, tethering and fusion. RAB8A is involved in polarized vesicular trafficking and neurotransmitter release. Together with RAB11A, RAB3IP, the exocyst complex, PARD3, PRKCI, ANXA2, CDC42 and DNMBP promotes transcytosis of PODXL to the apical membrane initiation sites (AMIS), apical surface formation and lumenogenesis. Regulates the compacted morphology of the Golgi. Together with MYO5B and RAB11A participates in epithelial cell polarization. Also involved in membrane trafficking to the cilium and ciliogenesis. Together with MICALL2, may also regulate adherens junction assembly. May play a role in insulin-induced transport to the plasma membrane of the glucose transporter GLUT4 and therefore play a role in glucose homeostasis. Involved in autophagy. Participates in the export of a subset of neosynthesized proteins through a Rab8-Rab10-Rab11-dependent endososomal export route. Targeted to and stabilized on stressed lysosomes through LRRK2 phosphorylation. Suppresses stress-induced lysosomal enlargement through EHBP1 and EHNP1L1 effector proteins. This is Ras-related protein Rab-8A from Mus musculus (Mouse).